The primary structure comprises 549 residues: Cytoplasmic trehalase (549 aa).

Residues R168, 175–176, N212, 221–223, 292–294, and G324 each bind substrate; these read WD, RSQ, and RDE. Active-site proton donor/acceptor residues include D326 and E509. Residue E525 coordinates substrate.

This sequence belongs to the glycosyl hydrolase 37 family. In terms of assembly, monomer.

The protein resides in the cytoplasm. It catalyses the reaction alpha,alpha-trehalose + H2O = alpha-D-glucose + beta-D-glucose. Its pathway is glycan degradation; trehalose degradation; D-glucose from alpha,alpha-trehalose: step 1/1. Functionally, hydrolyzes trehalose to glucose. Could be involved, in cells returning to low osmolarity conditions, in the utilization of the accumulated cytoplasmic trehalose, which was synthesized in response to high osmolarity. This is Cytoplasmic trehalase from Escherichia coli O157:H7.